The sequence spans 364 residues: Alanine racemase (364 aa).

K34 (proton acceptor; specific for D-alanine) is an active-site residue. The residue at position 34 (K34) is an N6-(pyridoxal phosphate)lysine. Residue R129 participates in substrate binding. The Proton acceptor; specific for L-alanine role is filled by Y259. Substrate is bound at residue M307.

It belongs to the alanine racemase family. Requires pyridoxal 5'-phosphate as cofactor.

The enzyme catalyses L-alanine = D-alanine. Its pathway is amino-acid biosynthesis; D-alanine biosynthesis; D-alanine from L-alanine: step 1/1. Catalyzes the interconversion of L-alanine and D-alanine. May also act on other amino acids. This is Alanine racemase (alr) from Coxiella burnetii (strain RSA 493 / Nine Mile phase I).